Reading from the N-terminus, the 429-residue chain is MKVSIFKTLYFQVLTAITIGVLLGHFYPEIGAQMKPLGDGFVKLIKMIIAPVIFCTVVTGIAGMESMKAVGRTGAIALLYFEIVSTLALLIGLVVVNVAQPGVGMNIDPATLDAKAVALYAEQASQQGIIPFLLDIIPGSVVGAFASGNILQVLLFAVLFGFALHRLGEKGQLIFNVIESFSRVIFGVINMIMRLAPLGAFGAMAFTIGKYGVGSLVQLGQLILCFYLTCILFVVLVLGTIAKFNGFNIFKFIRYIKEELLIVLGTSSSESVLPRMLDKMENAGCKKSVVGLVIPTGYSFNLDGTSIYLTMAAVFIAQATNTHMDIMHQVTLLVVLLLSSKGAAGVTGSGFIVLAATISAVGHLPLAGLALILGIDRFMSEARALTNLVGNGVATIVVAKWCKQLDNDQLQAVLSNKVLPNVKSSVSVS.

Transmembrane regions (helical) follow at residues 3–23 (VSIFKTLYFQVLTAITIGVLL), 44–64 (LIKMIIAPVIFCTVVTGIAGM), 76–96 (IALLYFEIVSTLALLIGLVVV), 144–164 (AFASGNILQVLLFAVLFGFAL), 184–204 (VIFGVINMIMRLAPLGAFGAM), 222–242 (LILCFYLTCILFVVLVLGTIA), 331–351 (TLLVVLLLSSKGAAGVTGSGF), and 352–372 (IVLAATISAVGHLPLAGLALI).

It belongs to the dicarboxylate/amino acid:cation symporter (DAACS) (TC 2.A.23) family.

Its subcellular location is the cell inner membrane. In terms of biological role, responsible for the transport of dicarboxylates such as succinate, fumarate, and malate from the periplasm across the membrane. This chain is C4-dicarboxylate transport protein, found in Yersinia pestis bv. Antiqua (strain Antiqua).